Here is a 112-residue protein sequence, read N- to C-terminus: Colipase (112 aa).

An N-terminal signal peptide occupies residues 1 to 17 (MKVLVVLLVTLVAVAYA). Positions 18–22 (APGPR) are cleaved as a propeptide — enterostatin, activation peptide. Intrachain disulfides connect C34/C45, C40/C56, C44/C78, C66/C86, and C80/C104.

This sequence belongs to the colipase family. In terms of assembly, forms a 1:1 stoichiometric complex with pancreatic lipase. As to expression, expressed by the pancreas.

Its subcellular location is the secreted. Its function is as follows. Colipase is a cofactor of pancreatic lipase. It allows the lipase to anchor itself to the lipid-water interface. Without colipase the enzyme is washed off by bile salts, which have an inhibitory effect on the lipase. Enterostatin has a biological activity as a satiety signal. In Rattus norvegicus (Rat), this protein is Colipase.